Reading from the N-terminus, the 231-residue chain is Two-component response regulator ORR1 (231 aa).

Positions 9–135 constitute a Response regulatory domain; the sequence is RVLLVDDSPV…DVQRLRKCSP (127 aa). Aspartate 68 is modified (4-aspartylphosphate).

Belongs to the ARR family. Type-A subfamily. In terms of processing, two-component system major event consists of a His-to-Asp phosphorelay between a sensor histidine kinase (HK) and a response regulator (RR). In plants, the His-to-Asp phosphorelay involves an additional intermediate named Histidine-containing phosphotransfer protein (HPt). This multistep phosphorelay consists of a His-Asp-His-Asp sequential transfer of a phosphate group between first a His and an Asp of the HK protein, followed by the transfer to a conserved His of the HPt protein and finally the transfer to an Asp in the receiver domain of the RR protein. As to expression, expressed in mature leaves and flowers, and at low levels in roots and shoots.

Its function is as follows. Functions as a response regulator involved in His-to-Asp phosphorelay signal transduction system. Phosphorylation of the Asp residue in the receiver domain activates the ability of the protein to promote the transcription of target genes. Type-A response regulators seem to act as negative regulators of the cytokinin signaling. This Oryza sativa subsp. indica (Rice) protein is Two-component response regulator ORR1.